The sequence spans 531 residues: MSQEILDQVRRRRTFAIISHPDAGKTTLTEKLLLFSGAIQSAGTVKGKKTGKFATSDWMDIEKQRGISVASSVMQFDYKDHTVNLLDTPGHQDFSEDTYRVLTAVDSALMVIDAAKGVEAQTIKLLNVCRLRDTPIVTFMNKYDREVRDSLELLDEVEDILQIRCAPVTWPIGMGKNFKGVYHILNDEIYLFEAGGERLPHEFDIIKGINNPELEQRFPLEIQQLRDEIELVQAASNEFNLDEFLAGELTPVFFGSAINNFGIQEILNSLIDWAPAPKPRDATMRMVGPDEPKFSGFIFKIQANMDPKHRDRIAFLRVCSGKFERGMKMKHLRINREIAASSVVTFMSHDRELAEEAYAGDIIGIPNHGNIQIGDSFSEGEQLAFTGIPFFAPELFRSVRIKNPLKIKQLQKGLQQLGEEGAVQVFKPMSGADLILGAVGVLQFEVVTSRLANEYGVEAVFDSASIWSARWVSCDDKKKLAEFEKANAGNLAIDAGGNLAYLAPNRVNLGLTQERWPDIVFHETREHSVKL.

Residues 10–278 (RRRRTFAIIS…SLIDWAPAPK (269 aa)) enclose the tr-type G domain. GTP-binding positions include 19-26 (SHPDAGKT), 87-91 (DTPGH), and 141-144 (NKYD).

It belongs to the TRAFAC class translation factor GTPase superfamily. Classic translation factor GTPase family. PrfC subfamily.

It is found in the cytoplasm. Increases the formation of ribosomal termination complexes and stimulates activities of RF-1 and RF-2. It binds guanine nucleotides and has strong preference for UGA stop codons. It may interact directly with the ribosome. The stimulation of RF-1 and RF-2 is significantly reduced by GTP and GDP, but not by GMP. This is Peptide chain release factor 3 from Neisseria gonorrhoeae (strain ATCC 700825 / FA 1090).